We begin with the raw amino-acid sequence, 312 residues long: Dihydroorotate dehydrogenase B (NAD(+)), catalytic subunit (312 aa).

Residues serine 23 and lysine 47–alanine 48 each bind FMN. Residues lysine 47 and asparagine 71–leucine 75 each bind substrate. FMN contacts are provided by asparagine 102 and asparagine 130. Substrate is bound at residue asparagine 130. Cysteine 133 (nucleophile) is an active-site residue. 2 residues coordinate FMN: lysine 168 and isoleucine 194. Asparagine 195–threonine 196 serves as a coordination point for substrate. Residues glycine 220, glycine 246–glycine 247, and glycine 268–threonine 269 contribute to the FMN site.

This sequence belongs to the dihydroorotate dehydrogenase family. Type 1 subfamily. As to quaternary structure, heterotetramer of 2 PyrK and 2 PyrD type B subunits. FMN is required as a cofactor.

It is found in the cytoplasm. The catalysed reaction is (S)-dihydroorotate + NAD(+) = orotate + NADH + H(+). It participates in pyrimidine metabolism; UMP biosynthesis via de novo pathway; orotate from (S)-dihydroorotate (NAD(+) route): step 1/1. In terms of biological role, catalyzes the conversion of dihydroorotate to orotate with NAD(+) as electron acceptor. The polypeptide is Dihydroorotate dehydrogenase B (NAD(+)), catalytic subunit (pyrDB) (Enterococcus faecalis (strain ATCC 700802 / V583)).